The primary structure comprises 633 residues: Chaperone protein dnaK2 (633 aa).

Threonine 197 carries the post-translational modification Phosphothreonine; by autocatalysis. Positions 600–633 (SNAASQAADGTSSESNNSTEGNDDVIDAEFTESK) are disordered. Residues 608–619 (DGTSSESNNSTE) show a composition bias toward low complexity. Residues 620–633 (GNDDVIDAEFTESK) are compositionally biased toward acidic residues.

This sequence belongs to the heat shock protein 70 family.

Acts as a chaperone. This is Chaperone protein dnaK2 (dnaK2) from Prochlorococcus marinus (strain SARG / CCMP1375 / SS120).